The sequence spans 201 residues: Peptidyl-tRNA hydrolase (201 aa).

Residue Y14 coordinates tRNA. The Proton acceptor role is filled by H19. TRNA-binding residues include Y64, N66, and N112.

Belongs to the PTH family. As to quaternary structure, monomer.

It is found in the cytoplasm. The enzyme catalyses an N-acyl-L-alpha-aminoacyl-tRNA + H2O = an N-acyl-L-amino acid + a tRNA + H(+). Functionally, hydrolyzes ribosome-free peptidyl-tRNAs (with 1 or more amino acids incorporated), which drop off the ribosome during protein synthesis, or as a result of ribosome stalling. In terms of biological role, catalyzes the release of premature peptidyl moieties from peptidyl-tRNA molecules trapped in stalled 50S ribosomal subunits, and thus maintains levels of free tRNAs and 50S ribosomes. This is Peptidyl-tRNA hydrolase from Afipia carboxidovorans (strain ATCC 49405 / DSM 1227 / KCTC 32145 / OM5) (Oligotropha carboxidovorans).